The sequence spans 526 residues: Calcium-dependent protein kinase 28 (526 aa).

The disordered stretch occupies residues 1–37; the sequence is MQPDPQPHGRGREKAAGAGPRLPPPVTAPSVGRPASV. The 259-residue stretch at 49-307 folds into the Protein kinase domain; sequence YRIGKKLGQG…AHEVLCHPWI (259 aa). Residues 55 to 63 and K78 each bind ATP; that span reads LGQGQFGTT. D173 (proton acceptor) is an active-site residue. The segment at 313–343 is autoinhibitory domain; it reads APDKPIDSAVLSRLKHFSAMNKLKKMALRVI. EF-hand domains lie at 350–385, 386–421, 422–457, and 460–491; these read EEIG…VGSD, LMEP…MNKL, EREE…FGLS, and HLED…GNAG. The Ca(2+) site is built by D363, D365, S367, T369, E374, D399, D401, S403, T405, E410, D435, D437, S439, E446, D469, N471, D473, Q475, and E480.

Belongs to the protein kinase superfamily. Ser/Thr protein kinase family. CDPK subfamily.

The catalysed reaction is L-seryl-[protein] + ATP = O-phospho-L-seryl-[protein] + ADP + H(+). It catalyses the reaction L-threonyl-[protein] + ATP = O-phospho-L-threonyl-[protein] + ADP + H(+). Its activity is regulated as follows. Activated by calcium. Autophosphorylation may play an important role in the regulation of the kinase activity. May play a role in signal transduction pathways that involve calcium as a second messenger. The chain is Calcium-dependent protein kinase 28 from Oryza sativa subsp. japonica (Rice).